Here is a 793-residue protein sequence, read N- to C-terminus: Endonuclease MutS2 (793 aa).

329 to 336 (GPNTGGKT) is a binding site for ATP. The interval 611–639 (LARARQAVEPTEEEQRARRRGEVPRGLKP) is disordered. The span at 623 to 639 (EEQRARRRGEVPRGLKP) shows a compositional bias: basic and acidic residues. In terms of domain architecture, Smr spans 717–792 (VDLRGLMVEE…GDGVTVAKLR (76 aa)).

The protein belongs to the DNA mismatch repair MutS family. MutS2 subfamily. Homodimer. Binds to stalled ribosomes, contacting rRNA.

Endonuclease that is involved in the suppression of homologous recombination and thus may have a key role in the control of bacterial genetic diversity. In terms of biological role, acts as a ribosome collision sensor, splitting the ribosome into its 2 subunits. Detects stalled/collided 70S ribosomes which it binds and splits by an ATP-hydrolysis driven conformational change. Acts upstream of the ribosome quality control system (RQC), a ribosome-associated complex that mediates the extraction of incompletely synthesized nascent chains from stalled ribosomes and their subsequent degradation. Probably generates substrates for RQC. The protein is Endonuclease MutS2 of Symbiobacterium thermophilum (strain DSM 24528 / JCM 14929 / IAM 14863 / T).